The primary structure comprises 189 residues: GTP cyclohydrolase 1 (189 aa).

Zn(2+)-binding residues include cysteine 78, histidine 81, and cysteine 150.

It belongs to the GTP cyclohydrolase I family. Toroid-shaped homodecamer, composed of two pentamers of five dimers.

The catalysed reaction is GTP + H2O = 7,8-dihydroneopterin 3'-triphosphate + formate + H(+). It functions in the pathway cofactor biosynthesis; 7,8-dihydroneopterin triphosphate biosynthesis; 7,8-dihydroneopterin triphosphate from GTP: step 1/1. The sequence is that of GTP cyclohydrolase 1 from Bacillus pumilus (strain SAFR-032).